Reading from the N-terminus, the 493-residue chain is Cytoplasmic tRNA 2-thiolation protein 2 (493 aa).

A Phosphoserine modification is found at Ser489.

This sequence belongs to the CTU2/NCS2 family. As to quaternary structure, interacts with NCS6 and URM1. May act by forming a heterodimer with NCS6.

It localises to the cytoplasm. It participates in tRNA modification; 5-methoxycarbonylmethyl-2-thiouridine-tRNA biosynthesis. In terms of biological role, plays a central role in 2-thiolation of mcm(5)S(2)U at tRNA wobble positions of tRNA(Lys), tRNA(Glu) and tRNA(Gln). May act by forming a heterodimer with NCS6 that ligates sulfur from thiocarboxylated URM1 onto the uridine of tRNAs at wobble position. Prior mcm(5) tRNA modification by the elongator complex is required for 2-thiolation. May also be involved in protein urmylation. The chain is Cytoplasmic tRNA 2-thiolation protein 2 from Saccharomyces cerevisiae (strain RM11-1a) (Baker's yeast).